Consider the following 236-residue polypeptide: 2-C-methyl-D-erythritol 4-phosphate cytidylyltransferase (236 aa).

This sequence belongs to the IspD/TarI cytidylyltransferase family. IspD subfamily. In terms of assembly, homodimer.

The catalysed reaction is 2-C-methyl-D-erythritol 4-phosphate + CTP + H(+) = 4-CDP-2-C-methyl-D-erythritol + diphosphate. The protein operates within isoprenoid biosynthesis; isopentenyl diphosphate biosynthesis via DXP pathway; isopentenyl diphosphate from 1-deoxy-D-xylulose 5-phosphate: step 2/6. Its function is as follows. Catalyzes the formation of 4-diphosphocytidyl-2-C-methyl-D-erythritol from CTP and 2-C-methyl-D-erythritol 4-phosphate (MEP). This Salmonella arizonae (strain ATCC BAA-731 / CDC346-86 / RSK2980) protein is 2-C-methyl-D-erythritol 4-phosphate cytidylyltransferase.